We begin with the raw amino-acid sequence, 183 residues long: Adenine phosphoribosyltransferase (183 aa).

It belongs to the purine/pyrimidine phosphoribosyltransferase family. In terms of assembly, homodimer.

It localises to the cytoplasm. It catalyses the reaction AMP + diphosphate = 5-phospho-alpha-D-ribose 1-diphosphate + adenine. The protein operates within purine metabolism; AMP biosynthesis via salvage pathway; AMP from adenine: step 1/1. Catalyzes a salvage reaction resulting in the formation of AMP, that is energically less costly than de novo synthesis. The chain is Adenine phosphoribosyltransferase from Photorhabdus laumondii subsp. laumondii (strain DSM 15139 / CIP 105565 / TT01) (Photorhabdus luminescens subsp. laumondii).